A 163-amino-acid polypeptide reads, in one-letter code: Probable chemoreceptor glutamine deamidase CheD (163 aa).

It belongs to the CheD family.

It carries out the reaction L-glutaminyl-[protein] + H2O = L-glutamyl-[protein] + NH4(+). Probably deamidates glutamine residues to glutamate on methyl-accepting chemotaxis receptors (MCPs), playing an important role in chemotaxis. The chain is Probable chemoreceptor glutamine deamidase CheD from Borreliella afzelii (strain PKo) (Borrelia afzelii).